A 624-amino-acid polypeptide reads, in one-letter code: Actin-related protein 8 (624 aa).

Met1 carries the post-translational modification N-acetylmethionine. The span at 1–25 (MTQAEKGDTENGKEKGGEKEKEQRG) shows a compositional bias: basic and acidic residues. Residues 1-29 (MTQAEKGDTENGKEKGGEKEKEQRGVKRP) form a disordered region. The ATP site is built by Ser55 and Thr56. Phosphoserine is present on Ser132. Position 283–286 (283–286 (DVGD)) interacts with ATP. Residue Ser412 is modified to Phosphoserine. Positions 430 to 462 (SKQEQSAKATADRKSASKPIGFEGDLRGQSSDL) are disordered.

Belongs to the actin family. ARP8 subfamily. In terms of assembly, component of the chromatin remodeling INO80 complex; specifically part of a complex module associated with the DBINO domain of INO80. Exists as monomers and dimers, but the dimer is most probably the biologically relevant form required for stable interactions with histones that exploits the twofold symmetry of the nucleosome core.

The protein resides in the nucleus. It localises to the chromosome. Its function is as follows. Plays an important role in the functional organization of mitotic chromosomes. Exhibits low basal ATPase activity, and unable to polymerize. Functionally, proposed core component of the chromatin remodeling INO80 complex which is involved in transcriptional regulation, DNA replication and probably DNA repair. Required for the recruitment of INO80 (and probably the INO80 complex) to sites of DNA damage Strongly prefer nucleosomes and H3-H4 tetramers over H2A-H2B dimers, suggesting it may act as a nucleosome recognition module within the complex. The sequence is that of Actin-related protein 8 (ACTR8) from Pongo abelii (Sumatran orangutan).